The chain runs to 319 residues: MARVVFRDARIYLIQWLTKIRHTLNQRQSLNTDKEHLRKIVRGMFWLMLLIISAKVAHSLWRYFSFSAEYTAVSPSANKPPRADAKTFDKNDVQLISQQNWFGKYQPVATPVKQPEPASVAETRLNVVLRGIAFGARPGAVIEEGGKQQVYLQGERLDSHNAVIEEINRDHVMLRYQGKIERLSLAEEGHSTVAVTNKKAVSDEAKQAVAEPAASAPVEIPTAVRQALTKDPQKIFNYIQLTPVRKEGIVGYAVKPGADRSLFDASGFKEGDIAIALNQQDFTDPRAMIALMRQLPSMDSIQLTVLRKGARHDISIALR.

Topologically, residues 1 to 42 (MARVVFRDARIYLIQWLTKIRHTLNQRQSLNTDKEHLRKIVR) are cytoplasmic. The chain crosses the membrane as a helical span at residues 43–65 (GMFWLMLLIISAKVAHSLWRYFS). The Periplasmic portion of the chain corresponds to 66 to 319 (FSAEYTAVSP…ARHDISIALR (254 aa)).

It belongs to the GSP C family. As to quaternary structure, interacts with outer cell membrane protein GspD2 in the periplasm.

The protein localises to the cell inner membrane. Functionally, involved in a type II secretion system (T2SS, formerly general secretion pathway, GSP) for the export of folded proteins across the outer membrane. The protein is Type II secretion system protein C 2 (gspC2) of Escherichia coli O78:H11 (strain H10407 / ETEC).